Consider the following 481-residue polypeptide: Ankyrin repeat, SAM and basic leucine zipper domain-containing protein 1 (481 aa).

Over residues Met1–Glu16 the composition is skewed to gly residues. The tract at residues Met1–Asp23 is disordered. Ser17, Ser18, and Ser20 each carry phosphoserine. 6 ANK repeats span residues Glu45–Ser74, Tyr78–Phe107, Asp110–Val144, Arg148–Thr177, Asn181–Leu210, and Asp214–Gly243. Positions Ser272 to Glu334 constitute an SAM domain.

In terms of assembly, interacts with DDX4, PIWIL1, RANBP9 and TDRD1.

The protein localises to the cytoplasm. Functionally, plays a central role during spermatogenesis by repressing transposable elements and preventing their mobilization, which is essential for the germline integrity. Acts via the piRNA metabolic process, which mediates the repression of transposable elements during meiosis by forming complexes composed of piRNAs and Piwi proteins and governs the methylation and subsequent repression of transposons. Its association with pi-bodies suggests a participation in the primary piRNAs metabolic process. Required prior to the pachytene stage to facilitate the production of multiple types of piRNAs, including those associated with repeats involved in the regulation of retrotransposons. May act by mediating protein-protein interactions during germ cell maturation. In Microcebus murinus (Gray mouse lemur), this protein is Ankyrin repeat, SAM and basic leucine zipper domain-containing protein 1 (ASZ1).